The following is a 1536-amino-acid chain: Glycogen debranching enzyme (1536 aa).

Catalysis depends on residues Asp-535, His-538, and Asp-670.

The protein belongs to the glycogen debranching enzyme family. In terms of assembly, interacts with IGD1.

Its subcellular location is the mitochondrion. The protein resides in the cytoplasm. The enzyme catalyses Transfers a segment of a (1-&gt;4)-alpha-D-glucan to a new position in an acceptor, which may be glucose or a (1-&gt;4)-alpha-D-glucan.. It carries out the reaction Hydrolysis of (1-&gt;6)-alpha-D-glucosidic branch linkages in glycogen phosphorylase limit dextrin.. Its activity is regulated as follows. Activity is inhibited by IGD1. In terms of biological role, multifunctional enzyme acting as 1,4-alpha-D-glucan:1,4-alpha-D-glucan 4-alpha-D-glycosyltransferase and amylo-1,6-glucosidase in glycogen degradation. In Saccharomyces cerevisiae (strain ATCC 204508 / S288c) (Baker's yeast), this protein is Glycogen debranching enzyme (GDB1).